Here is an 89-residue protein sequence, read N- to C-terminus: Small ribosomal subunit protein bS20 (89 aa).

Residues 1–12 (MANIKSAKKRAK) are compositionally biased toward basic residues. A disordered region spans residues 1–22 (MANIKSAKKRAKQTIVRNERNT).

This sequence belongs to the bacterial ribosomal protein bS20 family.

Functionally, binds directly to 16S ribosomal RNA. In Xanthomonas oryzae pv. oryzae (strain KACC10331 / KXO85), this protein is Small ribosomal subunit protein bS20.